The sequence spans 101 residues: Small ribosomal subunit protein uS14 (101 aa).

The protein belongs to the universal ribosomal protein uS14 family. In terms of assembly, part of the 30S ribosomal subunit. Contacts proteins S3 and S10.

Binds 16S rRNA, required for the assembly of 30S particles and may also be responsible for determining the conformation of the 16S rRNA at the A site. The sequence is that of Small ribosomal subunit protein uS14 from Bordetella parapertussis (strain 12822 / ATCC BAA-587 / NCTC 13253).